The following is a 78-amino-acid chain: UPF0291 protein SE_1024 (78 aa).

The segment at 53–78 is disordered; that stretch reads TKVIDPEGNDVTPEKLKKIQEEKHNK. The span at 64 to 78 shows a compositional bias: basic and acidic residues; that stretch reads TPEKLKKIQEEKHNK.

Belongs to the UPF0291 family.

The protein resides in the cytoplasm. The protein is UPF0291 protein SE_1024 of Staphylococcus epidermidis (strain ATCC 12228 / FDA PCI 1200).